Reading from the N-terminus, the 452-residue chain is Maltoporin (452 aa).

The first 25 residues, 1–25 (MMITLRKLPLAVAVAAGVMSAQAMA), serve as a signal peptide directing secretion.

Belongs to the porin LamB (TC 1.B.3) family. Homotrimer formed of three 18-stranded antiparallel beta-barrels, containing three independent channels.

The protein localises to the cell outer membrane. It carries out the reaction beta-maltose(in) = beta-maltose(out). Involved in the transport of maltose and maltodextrins. The polypeptide is Maltoporin (Salmonella agona (strain SL483)).